Consider the following 254-residue polypeptide: UPF0246 protein lpp1320 (254 aa).

This sequence belongs to the UPF0246 family.

In Legionella pneumophila (strain Paris), this protein is UPF0246 protein lpp1320.